We begin with the raw amino-acid sequence, 347 residues long: Heat-inducible transcription repressor HrcA (347 aa).

It belongs to the HrcA family.

Functionally, negative regulator of class I heat shock genes (grpE-dnaK-dnaJ and groELS operons). Prevents heat-shock induction of these operons. This is Heat-inducible transcription repressor HrcA from Mycobacterium sp. (strain JLS).